The primary structure comprises 418 residues: Nuclear hormone receptor family member nhr-209 (418 aa).

A DNA-binding region (nuclear receptor) is located at residues 43 to 121; the sequence is PEKCAVCKNA…VGMDSTAIRA (79 aa). NR C4-type zinc fingers lie at residues 46-66 and 82-104; these read CAVCKNAAIGYHYNVPSCNGC and CMNHKNCLDEIESDESQRLCKGC. The NR LBD domain occupies 174 to 414; it reads TIPDGFEDMR…SHPPKSLFDE (241 aa). The AF-2 stretch occupies residues 403–414; sequence ECSHPPKSLFDE.

This sequence belongs to the nuclear hormone receptor family.

It localises to the nucleus. In terms of biological role, transcriptional regulator. Plays a role in modulation of lifespan and immunity. The protein is Nuclear hormone receptor family member nhr-209 of Caenorhabditis elegans.